The chain runs to 354 residues: Clavesin-1 (354 aa).

The 162-residue stretch at 118–279 folds into the CRAL-TRIO domain; sequence IKRALIDGFP…EFGGTLPPYD (162 aa). The tract at residues 333-354 is disordered; the sequence is AGTLKHEEKGENENTQPLLALD. A compositionally biased stretch (basic and acidic residues) spans 335–344; the sequence is TLKHEEKGEN. A compositionally biased stretch (polar residues) spans 345 to 354; sequence ENTQPLLALD.

In terms of assembly, forms a complex with clathrin heavy chain and gamma-adaptin.

It localises to the golgi apparatus. It is found in the trans-Golgi network membrane. The protein resides in the early endosome membrane. The protein localises to the cytoplasmic vesicle. Its subcellular location is the clathrin-coated vesicle. Required for normal morphology of late endosomes and/or lysosomes in neurons. Binds phosphatidylinositol 3,5-bisphosphate (PtdIns(3,5)P2). The chain is Clavesin-1 (CLVS1) from Pongo abelii (Sumatran orangutan).